A 2358-amino-acid polypeptide reads, in one-letter code: Cell wall alpha-1,3-glucan synthase mok13 (2358 aa).

Residues 1645-1659 show a composition bias toward basic and acidic residues; the sequence is EGLENEENELKDKAP. Positions 1645-1669 are disordered; sequence EGLENEENELKDKAPPNEPNVGSLF.

It belongs to the glycosyltransferase group 1 family.

The enzyme catalyses [(1-&gt;3)-alpha-D-glucosyl](n) + UDP-alpha-D-glucose = [(1-&gt;3)-alpha-D-glucosyl](n+1) + UDP + H(+). The sequence is that of Cell wall alpha-1,3-glucan synthase mok13 (mok13) from Schizosaccharomyces pombe (strain 972 / ATCC 24843) (Fission yeast).